Consider the following 377-residue polypeptide: Outer membrane porin N (377 aa).

Positions 1-21 (MKSKVLALLIPALLAAGAAHA) are cleaved as a signal peptide. The segment covering 175 to 189 (NNEGASNGQEGTNNG) has biased composition (polar residues). The interval 175-196 (NNEGASNGQEGTNNGRDVRHEN) is disordered.

This sequence belongs to the Gram-negative porin family. As to quaternary structure, homotrimer.

Its subcellular location is the cell outer membrane. Its function is as follows. Forms pores that allow passive diffusion of small molecules across the outer membrane. Non-specific porin. This chain is Outer membrane porin N (ompN), found in Escherichia coli (strain K12).